Here is a 553-residue protein sequence, read N- to C-terminus: MDIKRTVLWVIFFMSAVMLYDNWQRSHGRPSMFFPSATQTAPAAAGGASGAGATTTAGNVPAPAAGTAPATTAPAAQAQLVKFSTDVYDGEIDTRGGTLAKLTLKKQGDGKQPDLYITLFDHTAGHTYLARTGLLGGDFPNHNDVYTQVNAGPTSLSGDQNTLKLSFESPVKGGVKVVKTYTFTRGSYVIGVDTKIDNVGTTPVTPTLYMELVRDNTAVETPMFSHTFLGPAVYTDAKHFQKINFSDLDKNKADYVTSADNGWVAMVQHYFASAWIPQHGVKRDIYAEKIDPSLYRVGVKQPVAAIAPGQSADVQARLFAGPEEERMLEGIAPGLELVKDYGWVTIIAKPLFWLLEKIHSYVGNWGWAIVLLTLLIKAVFFPLSAASYKSMARMKEITPRMQALRERFKNDPQKMNAALMELYKTEKVNPFGGCLPVVIQIPVFISLYWVLLASVEMRGAPWILWIHDLSQRDPYFILPVLMAVSMYVQTSLNPTPPDPVQAKMMKFMPIAFSVMFFFFPAGLVLYYVVNNVLSIAQQYYITRKLGGVKKKPA.

Transmembrane regions (helical) follow at residues 7–24 (VLWV…DNWQ), 365–385 (WGWA…PLSA), 435–455 (LPVV…LASV), 474–494 (PYFI…SLNP), and 509–529 (PIAF…YYVV).

The protein belongs to the OXA1/ALB3/YidC family. Type 1 subfamily. As to quaternary structure, interacts with the Sec translocase complex via SecD. Specifically interacts with transmembrane segments of nascent integral membrane proteins during membrane integration.

The protein resides in the cell inner membrane. Functionally, required for the insertion and/or proper folding and/or complex formation of integral membrane proteins into the membrane. Involved in integration of membrane proteins that insert both dependently and independently of the Sec translocase complex, as well as at least some lipoproteins. Aids folding of multispanning membrane proteins. The polypeptide is Membrane protein insertase YidC (Burkholderia multivorans (strain ATCC 17616 / 249)).